Here is a 489-residue protein sequence, read N- to C-terminus: Rhamnulokinase (489 aa).

An ATP-binding site is contributed by 13–17 (ASSGR). An intrachain disulfide couples Cys-68 to Cys-222. Substrate is bound by residues Gly-83 and 236 to 238 (HDT). Asp-237 acts as the Proton acceptor in catalysis. Thr-259 provides a ligand contact to ATP. Residue Asn-296 participates in substrate binding. Gln-304 is an ATP binding site. An intrachain disulfide couples Cys-353 to Cys-370. Gly-402 lines the ATP pocket. Cys-413 and Cys-417 form a disulfide bridge.

Belongs to the rhamnulokinase family. Monomer. Mg(2+) is required as a cofactor.

The catalysed reaction is L-rhamnulose + ATP = L-rhamnulose 1-phosphate + ADP + H(+). Its pathway is carbohydrate degradation; L-rhamnose degradation; glycerone phosphate from L-rhamnose: step 2/3. Involved in the catabolism of L-rhamnose (6-deoxy-L-mannose). Catalyzes the transfer of the gamma-phosphate group from ATP to the 1-hydroxyl group of L-rhamnulose to yield L-rhamnulose 1-phosphate. This chain is Rhamnulokinase, found in Escherichia coli O139:H28 (strain E24377A / ETEC).